Reading from the N-terminus, the 388-residue chain is Probable acetyl-CoA acetyltransferase (388 aa).

Residue cysteine 84 is the Acyl-thioester intermediate of the active site. Lysine 187 is covalently cross-linked (Isoglutamyl lysine isopeptide (Lys-Gln) (interchain with Q-Cter in protein Pup)). Active-site proton acceptor residues include histidine 345 and cysteine 375.

This sequence belongs to the thiolase-like superfamily. Thiolase family.

The catalysed reaction is 2 acetyl-CoA = acetoacetyl-CoA + CoA. The chain is Probable acetyl-CoA acetyltransferase from Mycolicibacterium smegmatis (strain ATCC 700084 / mc(2)155) (Mycobacterium smegmatis).